We begin with the raw amino-acid sequence, 526 residues long: Aspartate ammonia-lyase (526 aa).

The disordered stretch occupies residues 1-44; that stretch reads MSKTSNKSSADSKNDAKAEDIVNGENQIATNESQSSDSAAVSER. Positions 10-20 are enriched in basic and acidic residues; it reads ADSKNDAKAED. Polar residues predominate over residues 24–39; sequence GENQIATNESQSSDSA. Positions 155, 194, 195, 196, and 241 each coordinate L-aspartate. The SS loop stretch occupies residues 371–380; that stretch reads GSSIMPAKVN. S372 (proton acceptor) is an active-site residue. The L-aspartate site is built by S373 and K378.

The protein belongs to the class-II fumarase/aspartase family. Aspartase subfamily. In terms of assembly, homotetramer.

It catalyses the reaction L-aspartate = fumarate + NH4(+). Catalyzes the reversible conversion of L-aspartate to fumarate and ammonia. In Corynebacterium glutamicum (strain ATCC 13032 / DSM 20300 / JCM 1318 / BCRC 11384 / CCUG 27702 / LMG 3730 / NBRC 12168 / NCIMB 10025 / NRRL B-2784 / 534), this protein is Aspartate ammonia-lyase.